Consider the following 576-residue polypeptide: Arginine--tRNA ligase (576 aa).

The short motif at Ala-132 to His-142 is the 'HIGH' region element.

Belongs to the class-I aminoacyl-tRNA synthetase family. As to quaternary structure, monomer.

Its subcellular location is the cytoplasm. It catalyses the reaction tRNA(Arg) + L-arginine + ATP = L-arginyl-tRNA(Arg) + AMP + diphosphate. The chain is Arginine--tRNA ligase from Ehrlichia ruminantium (strain Gardel).